Here is a 327-residue protein sequence, read N- to C-terminus: Serine/threonine-protein phosphatase PP2A catalytic subunit (327 aa).

Residues D75, H77, D103, and N135 each contribute to the Mn(2+) site. The Proton donor role is filled by H136. 2 residues coordinate Mn(2+): H185 and H259. L327 bears the Leucine methyl ester mark.

The protein belongs to the PPP phosphatase family. PP-2A subfamily. Mn(2+) is required as a cofactor.

It catalyses the reaction O-phospho-L-seryl-[protein] + H2O = L-seryl-[protein] + phosphate. The catalysed reaction is O-phospho-L-threonyl-[protein] + H2O = L-threonyl-[protein] + phosphate. The chain is Serine/threonine-protein phosphatase PP2A catalytic subunit (pph-1) from Neurospora crassa (strain ATCC 24698 / 74-OR23-1A / CBS 708.71 / DSM 1257 / FGSC 987).